The primary structure comprises 653 residues: uncharacterized protein (653 aa).

The next 2 membrane-spanning stretches (helical) occupy residues 39–59 (AMTT…LKLI) and 207–227 (AVFV…AFTI). The region spanning 225-277 (FTITKPIRELLTGVKNIASGDFHQRISLPFGGELGALIFNFNEMAERLEKYEQ) is the HAMP domain. One can recognise a PAS domain in the interval 286–356 (EKAKLETLVS…PALNDIVRKN (71 aa)). The region spanning 421-651 (NVSHELRTPL…CFFFDLIIAK (231 aa)) is the Histidine kinase domain. At His424 the chain carries Phosphohistidine; by autocatalysis.

It is found in the plastid. Its subcellular location is the chloroplast membrane. The enzyme catalyses ATP + protein L-histidine = ADP + protein N-phospho-L-histidine.. This is an uncharacterized protein from Pyropia yezoensis (Susabi-nori).